Reading from the N-terminus, the 649-residue chain is Protein teflon (649 aa).

The segment at 33-56 (LYCHFCRDLFTQLPEFLRHLQSNH) adopts a C2H2-type 1 zinc-finger fold. A disordered region spans residues 78–126 (EQGKAHEDAQSAGHNSSSGDSSSLMNSEDSRAIEGSEDNSDNSPMKPEQ). Positions 88–104 (SAGHNSSSGDSSSLMNS) are enriched in low complexity. C2H2-type zinc fingers lie at residues 599–621 (YFCK…LISH) and 625–648 (FQCT…RNAH).

This sequence belongs to the Teflon family. Expressed at a low level in a variety of tissues, highest expression is in testis.

It is found in the nucleus. The protein resides in the chromosome. Its function is as follows. Specifically required in males for proper segregation of autosomal bivalents at meiosis I. Expression is required in the male germ line prior to spermatocyte stage S4. May have a role as a bridging molecule maintaining adhesion to hold autosome bivalents together via heterochromatic connections. The chain is Protein teflon from Drosophila melanogaster (Fruit fly).